The primary structure comprises 379 residues: Lipid-A-disaccharide synthase (379 aa).

Belongs to the LpxB family.

The enzyme catalyses a lipid X + a UDP-2-N,3-O-bis[(3R)-3-hydroxyacyl]-alpha-D-glucosamine = a lipid A disaccharide + UDP + H(+). It functions in the pathway bacterial outer membrane biogenesis; LPS lipid A biosynthesis. Condensation of UDP-2,3-diacylglucosamine and 2,3-diacylglucosamine-1-phosphate to form lipid A disaccharide, a precursor of lipid A, a phosphorylated glycolipid that anchors the lipopolysaccharide to the outer membrane of the cell. This is Lipid-A-disaccharide synthase from Aeromonas hydrophila subsp. hydrophila (strain ATCC 7966 / DSM 30187 / BCRC 13018 / CCUG 14551 / JCM 1027 / KCTC 2358 / NCIMB 9240 / NCTC 8049).